The sequence spans 406 residues: Cysteine desulfurase (406 aa).

Lys226 is subject to N6-(pyridoxal phosphate)lysine. Cys364 serves as the catalytic Cysteine persulfide intermediate.

This sequence belongs to the class-V pyridoxal-phosphate-dependent aminotransferase family. Csd subfamily. Homodimer. Interacts with SufE and the SufBCD complex composed of SufB, SufC and SufD. The interaction with SufE is required to mediate the direct transfer of the sulfur atom from the S-sulfanylcysteine. Pyridoxal 5'-phosphate is required as a cofactor.

The protein resides in the cytoplasm. The enzyme catalyses (sulfur carrier)-H + L-cysteine = (sulfur carrier)-SH + L-alanine. It carries out the reaction L-selenocysteine + AH2 = hydrogenselenide + L-alanine + A + H(+). It participates in cofactor biosynthesis; iron-sulfur cluster biosynthesis. Functionally, cysteine desulfurases mobilize the sulfur from L-cysteine to yield L-alanine, an essential step in sulfur metabolism for biosynthesis of a variety of sulfur-containing biomolecules. Component of the suf operon, which is activated and required under specific conditions such as oxidative stress and iron limitation. Acts as a potent selenocysteine lyase in vitro, that mobilizes selenium from L-selenocysteine. Selenocysteine lyase activity is however unsure in vivo. The protein is Cysteine desulfurase of Shigella sonnei (strain Ss046).